A 292-amino-acid chain; its full sequence is uncharacterized protein (292 aa).

K8 participates in a covalent cross-link: Glycyl lysine isopeptide (Lys-Gly) (interchain with G-Cter in SUMO2). The tract at residues 47–67 (TKRKMLPSSSSRMRSDGFDEE) is disordered. A Glycyl lysine isopeptide (Lys-Gly) (interchain with G-Cter in SUMO2) cross-link involves residue K76. A Phosphothreonine modification is found at N94. K96 and F97 each carry phosphoserine. Positions 122-292 (ETDSDQQDIT…ERSAESSEDD (171 aa)) are disordered. Phosphothreonine is present on T123. Phosphoserine occurs at positions 125 and 126. A compositionally biased stretch (polar residues) spans 128-140 (QDITNGKKTSPQV). Over residues 147–173 (SRKHKKSKKSHKKKQKKRSHKKQKKSK) the composition is skewed to basic residues. Residues 180–194 (TADSSSEFSEETGAS) are compositionally biased toward polar residues. 2 stretches are compositionally biased toward basic residues: residues 197–215 (RKGK…KSLK) and 247–259 (KKTK…KKAH). Basic and acidic residues predominate over residues 280 to 292 (ATDERSAESSEDD).

This is an uncharacterized protein from Homo sapiens (Human).